We begin with the raw amino-acid sequence, 629 residues long: tRNA uridine 5-carboxymethylaminomethyl modification enzyme MnmG (629 aa).

Position 13–18 (13–18) interacts with FAD; the sequence is GGGHAG. Residue 273–287 participates in NAD(+) binding; the sequence is GPRYCPSIEDKINRF.

This sequence belongs to the MnmG family. Homodimer. Heterotetramer of two MnmE and two MnmG subunits. The cofactor is FAD.

It is found in the cytoplasm. Its function is as follows. NAD-binding protein involved in the addition of a carboxymethylaminomethyl (cmnm) group at the wobble position (U34) of certain tRNAs, forming tRNA-cmnm(5)s(2)U34. In Shewanella piezotolerans (strain WP3 / JCM 13877), this protein is tRNA uridine 5-carboxymethylaminomethyl modification enzyme MnmG.